We begin with the raw amino-acid sequence, 384 residues long: Organic solute transporter alpha-like protein 1 (384 aa).

Over 1-38 (MEIVKTIIPHNRSYIEPPIPSATEWLANMSVMHVSCLT) the chain is Extracellular. Residues N11 and N28 are each glycosylated (N-linked (GlcNAc...) asparagine). Residues 39–59 (IACVFVAITFLSSFFHLFFVL) form a helical membrane-spanning segment. Topologically, residues 60–70 (KYVSNERIRND) are cytoplasmic. Residues 71 to 91 (MYALIFMFPITTFASLVGMFI) traverse the membrane as a helical segment. Over 92-93 (PR) the chain is Extracellular. The helical transmembrane segment at 94-114 (AAIFLYAVSLVYFMFTLFIMV) threads the bilayer. The Cytoplasmic portion of the chain corresponds to 115 to 165 (TLLFNIFGGRQEMSAYLLQRNIRVNFTVPPLCFFKFLPTVESTDQNLRRIE). The helical transmembrane segment at 166 to 186 (WLVFQTPIIRTLLELVSVVVS) threads the bilayer. At 187-202 (MEQEGRRESVWFVFSQ) the chain is on the extracellular side. Residues 203 to 223 (LMALLSMCIAFYGCYVMVPLG) form a helical membrane-spanning segment. The Cytoplasmic portion of the chain corresponds to 224–240 (REKHAPYRFDFLFRTCD). Residues 241–261 (IAQCIYTIQKFVFEFAAAVGL) traverse the membrane as a helical segment. The Extracellular segment spans residues 262–273 (ITSDRYLPAAAK). A helical membrane pass occupies residues 274–294 (ALWWASFMCTWEMMLLSALCS). Over 295-384 (YCLRPAKCKF…FDSLSQIQGQ (90 aa)) the chain is Cytoplasmic.

This sequence belongs to the OST-alpha family.

The protein localises to the cell membrane. In terms of biological role, probable transporter. This chain is Organic solute transporter alpha-like protein 1 (osta-1), found in Caenorhabditis elegans.